The primary structure comprises 158 residues: Endoribonuclease YbeY (158 aa).

3 residues coordinate Zn(2+): His114, His118, and His124.

This sequence belongs to the endoribonuclease YbeY family. Zn(2+) is required as a cofactor.

It localises to the cytoplasm. In terms of biological role, single strand-specific metallo-endoribonuclease involved in late-stage 70S ribosome quality control and in maturation of the 3' terminus of the 16S rRNA. This Pasteurella multocida (strain Pm70) protein is Endoribonuclease YbeY.